A 423-amino-acid chain; its full sequence is Gamma-glutamyl phosphate reductase (423 aa).

It belongs to the gamma-glutamyl phosphate reductase family.

The protein resides in the cytoplasm. It catalyses the reaction L-glutamate 5-semialdehyde + phosphate + NADP(+) = L-glutamyl 5-phosphate + NADPH + H(+). The protein operates within amino-acid biosynthesis; L-proline biosynthesis; L-glutamate 5-semialdehyde from L-glutamate: step 2/2. Functionally, catalyzes the NADPH-dependent reduction of L-glutamate 5-phosphate into L-glutamate 5-semialdehyde and phosphate. The product spontaneously undergoes cyclization to form 1-pyrroline-5-carboxylate. The protein is Gamma-glutamyl phosphate reductase of Roseiflexus castenholzii (strain DSM 13941 / HLO8).